The following is a 153-amino-acid chain: Endoribonuclease YbeY (153 aa).

Residues H114, H118, and H124 each coordinate Zn(2+).

This sequence belongs to the endoribonuclease YbeY family. It depends on Zn(2+) as a cofactor.

It localises to the cytoplasm. Single strand-specific metallo-endoribonuclease involved in late-stage 70S ribosome quality control and in maturation of the 3' terminus of the 16S rRNA. In Shewanella denitrificans (strain OS217 / ATCC BAA-1090 / DSM 15013), this protein is Endoribonuclease YbeY.